We begin with the raw amino-acid sequence, 142 residues long: Large ribosomal subunit protein uL13 (142 aa).

It belongs to the universal ribosomal protein uL13 family. Part of the 50S ribosomal subunit.

Its function is as follows. This protein is one of the early assembly proteins of the 50S ribosomal subunit, although it is not seen to bind rRNA by itself. It is important during the early stages of 50S assembly. In Hahella chejuensis (strain KCTC 2396), this protein is Large ribosomal subunit protein uL13.